Consider the following 311-residue polypeptide: Methionyl-tRNA formyltransferase (311 aa).

110–113 (SLLP) contributes to the (6S)-5,6,7,8-tetrahydrofolate binding site.

The protein belongs to the Fmt family.

It carries out the reaction L-methionyl-tRNA(fMet) + (6R)-10-formyltetrahydrofolate = N-formyl-L-methionyl-tRNA(fMet) + (6S)-5,6,7,8-tetrahydrofolate + H(+). Attaches a formyl group to the free amino group of methionyl-tRNA(fMet). The formyl group appears to play a dual role in the initiator identity of N-formylmethionyl-tRNA by promoting its recognition by IF2 and preventing the misappropriation of this tRNA by the elongation apparatus. The chain is Methionyl-tRNA formyltransferase from Streptococcus pyogenes serotype M49 (strain NZ131).